Reading from the N-terminus, the 594-residue chain is Aspartate--tRNA ligase (594 aa).

An L-aspartate-binding site is contributed by E171. The interval 195–198 (QLFK) is aspartate. Residue R217 coordinates L-aspartate. ATP is bound by residues 217–219 (RDE) and Q226. H449 contributes to the L-aspartate binding site. E483 lines the ATP pocket. Residue R490 participates in L-aspartate binding. ATP is bound at residue 535–538 (GLDR).

The protein belongs to the class-II aminoacyl-tRNA synthetase family. Type 1 subfamily. In terms of assembly, homodimer.

It localises to the cytoplasm. It carries out the reaction tRNA(Asp) + L-aspartate + ATP = L-aspartyl-tRNA(Asp) + AMP + diphosphate. Catalyzes the attachment of L-aspartate to tRNA(Asp) in a two-step reaction: L-aspartate is first activated by ATP to form Asp-AMP and then transferred to the acceptor end of tRNA(Asp). The chain is Aspartate--tRNA ligase from Proteus mirabilis (strain HI4320).